The sequence spans 483 residues: Keratin, type II cytoskeletal 8 (483 aa).

The span at 1 to 25 shows a compositional bias: polar residues; sequence MSVRVTQKSYKMSTSGPRAFSSRSF. The tract at residues 1–43 is disordered; it reads MSVRVTQKSYKMSTSGPRAFSSRSFTSGPGARISSSSFSRVGS. The head stretch occupies residues 1–90; sequence MSVRVTQKSY…DPNIQAVRTQ (90 aa). Phosphoserine; by PKC/PRKCE is present on S9. K11 participates in a covalent cross-link: Glycyl lysine isopeptide (Lys-Gly) (interchain with G-Cter in SUMO2). Phosphoserine occurs at positions 13, 15, 21, and 22. R23 is modified (omega-N-methylarginine). S24 bears the Phosphoserine; by PKC/PRKCE mark. S24 carries the phosphoserine modification. Residue T26 is modified to Phosphothreonine. The segment covering 26–43 has biased composition (low complexity); it reads TSGPGARISSSSFSRVGS. S27 carries the phosphoserine modification. Residue R32 is modified to Omega-N-methylarginine. A phosphoserine mark is found at S34, S37, and S39. R40 carries the post-translational modification Omega-N-methylarginine. Residues S43, S44, and S47 each carry the phosphoserine modification. R49 bears the Asymmetric dimethylarginine; alternate mark. At R49 the chain carries Omega-N-methylarginine; alternate. The residue at position 51 (S51) is a Phosphoserine. Residues 91 to 126 are coil 1A; it reads EKEQIKTLNNKFASFIDKVRFLEQQNKMLETKWSLL. The region spanning 91–402 is the IF rod domain; it reads EKEQIKTLNN…KLLEGEESRL (312 aa). K101 is modified (N6-malonyllysine). Glycyl lysine isopeptide (Lys-Gly) (interchain with G-Cter in SUMO2) cross-links involve residues K122 and K130. Positions 127–143 are linker 1; that stretch reads QQQKTSRSNMDNMFESY. Residues 144 to 235 form a coil 1B region; that stretch reads INNLRRQLEA…QIHEEEIREL (92 aa). A Glycyl lysine isopeptide (Lys-Gly) (interchain with G-Cter in SUMO1); alternate cross-link involves residue K197. A Glycyl lysine isopeptide (Lys-Gly) (interchain with G-Cter in SUMO2); alternate cross-link involves residue K197. K207 is subject to N6-acetyllysine. Residues 236 to 259 are linker 12; that stretch reads QSQISDTSVVLSMDNSRSLDMDSI. A phosphoserine mark is found at S253, S258, and S274. The tract at residues 260–398 is coil 2; that stretch reads IAEVRAQYEE…ATYRKLLEGE (139 aa). The tract at residues 261–382 is necessary for interaction with PNN; sequence AEVRAQYEEI…EYQELMNVKL (122 aa). K285 participates in a covalent cross-link: Glycyl lysine isopeptide (Lys-Gly) (interchain with G-Cter in SUMO2). K295 is covalently cross-linked (Glycyl lysine isopeptide (Lys-Gly) (interchain with G-Cter in SUMO2); alternate). K295 is subject to N6-acetyllysine; alternate. K304 is covalently cross-linked (Glycyl lysine isopeptide (Lys-Gly) (interchain with G-Cter in SUMO2)). Residue K325 forms a Glycyl lysine isopeptide (Lys-Gly) (interchain with G-Cter in SUMO2); alternate linkage. N6-acetyllysine; alternate is present on K325. K393 participates in a covalent cross-link: Glycyl lysine isopeptide (Lys-Gly) (interchain with G-Cter in SUMO2). The interval 399 to 483 is tail; sequence ESRLESGMQN…VSESSDIMSK (85 aa). A phosphoserine mark is found at S400, S404, S410, S417, S424, S426, and S432. Residue K472 forms a Glycyl lysine isopeptide (Lys-Gly) (interchain with G-Cter in SUMO1); alternate linkage. K472 is covalently cross-linked (Glycyl lysine isopeptide (Lys-Gly) (interchain with G-Cter in SUMO2); alternate). Residues S475, S477, S478, and S482 each carry the phosphoserine modification.

This sequence belongs to the intermediate filament family. In terms of assembly, heterotetramer of two type I and two type II keratins. Forms a heterodimer with KRT18. Associates with KRT20. Interacts with PNN. When associated with KRT19, interacts with DMD. Interacts with TCHP. Interacts with APEX1. Interacts with GPER1. Interacts with EPPK1. Interacts with PKP1 and PKP2. In terms of processing, O-glycosylated. O-GlcNAcylation at multiple sites increases solubility, and decreases stability by inducing proteasomal degradation. Post-translationally, O-glycosylated (O-GlcNAcylated), in a cell cycle-dependent manner. As to expression, expressed in cardiac and striated muscle. Expressed at Z-lines within the muscle fibers and at Z-line and M-line domains at costameres at the sarcolemmal membrane (at protein level). Observed in coagulating gland, bladder, salivary gland, kidney, spleen, thymus, lung and heart. Also observed in ventral prostate, seminal vesicle and liver where expression increases following castration.

The protein localises to the cytoplasm. It localises to the nucleus. It is found in the nucleoplasm. The protein resides in the nucleus matrix. Its function is as follows. Together with KRT19, helps to link the contractile apparatus to dystrophin at the costameres of striated muscle. The sequence is that of Keratin, type II cytoskeletal 8 (Krt8) from Rattus norvegicus (Rat).